The chain runs to 391 residues: NADH-quinone oxidoreductase subunit D (391 aa).

It belongs to the complex I 49 kDa subunit family. As to quaternary structure, NDH-1 is composed of 14 different subunits. Subunits NuoB, C, D, E, F, and G constitute the peripheral sector of the complex.

It localises to the cell inner membrane. It catalyses the reaction a quinone + NADH + 5 H(+)(in) = a quinol + NAD(+) + 4 H(+)(out). In terms of biological role, NDH-1 shuttles electrons from NADH, via FMN and iron-sulfur (Fe-S) centers, to quinones in the respiratory chain. The immediate electron acceptor for the enzyme in this species is believed to be ubiquinone. Couples the redox reaction to proton translocation (for every two electrons transferred, four hydrogen ions are translocated across the cytoplasmic membrane), and thus conserves the redox energy in a proton gradient. The protein is NADH-quinone oxidoreductase subunit D of Rickettsia akari (strain Hartford).